Consider the following 468-residue polypeptide: MSKQQIGVVGMAVMGRNLALNIESRGYTVSIFNRSREKTEEVIAENPGKKLVPYYTVKEFVESLETPRRILLMVKAGAGTDAAIDSLKPYLDKGDIIIDGGNTFFQDTIRRNRELSAEGFNFIGTGVSGGEEGALKGPSIMPGGQKEAYELVAPILTKIAAVAEDGEPCVTYIGADGAGHYVKMVHNGIEYGDMQLIAEAYSLLKGGLNLTNEELAQTFTEWNNGELSSYLIDITKDIFTKKDEDGNYLVDVILDEAANKGTGKWTSQSALDLGEPLSLITESVFARYISSLKDQRVAASKVLSGPQAQPAGDKAEFIEKVRRALYLGKIVSYAQGFSQLRAASEEYNWDLNYGEIAKIFRAGCIIRAQFLQKITDAYAENPQIANLLLAPYFKQIADDYQQALRDVVAYAVQNGIPVPTFSAAVAYYDSYRAAVLPANLIQAQRDYFGAHTYKRIDKEGVFHTEWLD.

Residues 10–15 (GMAVMG), 33–35 (NRS), 74–76 (VKA), and Asn102 each bind NADP(+). Substrate contacts are provided by residues Asn102 and 128–130 (SGG). Lys183 (proton acceptor) is an active-site residue. 186-187 (HN) is a binding site for substrate. The Proton donor role is filled by Glu190. Residues Tyr191, Lys260, Arg287, Arg445, and His451 each contribute to the substrate site.

The protein belongs to the 6-phosphogluconate dehydrogenase family. In terms of assembly, homodimer.

The catalysed reaction is 6-phospho-D-gluconate + NADP(+) = D-ribulose 5-phosphate + CO2 + NADPH. It functions in the pathway carbohydrate degradation; pentose phosphate pathway; D-ribulose 5-phosphate from D-glucose 6-phosphate (oxidative stage): step 3/3. In terms of biological role, catalyzes the oxidative decarboxylation of 6-phosphogluconate to ribulose 5-phosphate and CO(2), with concomitant reduction of NADP to NADPH. In Escherichia coli (strain K12), this protein is 6-phosphogluconate dehydrogenase, decarboxylating (gnd).